Consider the following 167-residue polypeptide: Phospholipase A and acyltransferase 1 (167 aa).

Topologically, residues 1-138 (MAVNDCFSLT…GEGVSEQANR (138 aa)) are cytoplasmic. The region spanning 20–135 (LIEVFRPCYQ…LRYGEGVSEQ (116 aa)) is the LRAT domain. His-30 is a catalytic residue. Cys-119 acts as the Acyl-thioester intermediate in catalysis. Residues 139 to 159 (AIGTIGLVAAGIDIFTFLGLF) traverse the membrane as a helical segment. Residues 160–167 (PKRQGAKS) are Lumenal-facing.

This sequence belongs to the H-rev107 family.

It localises to the membrane. Its subcellular location is the cytoplasm. It is found in the nucleus. The catalysed reaction is a 1,2-diacyl-sn-glycero-3-phosphocholine + H2O = a 1-acyl-sn-glycero-3-phosphocholine + a fatty acid + H(+). It catalyses the reaction a 1,2-diacyl-sn-glycero-3-phosphocholine + H2O = a 2-acyl-sn-glycero-3-phosphocholine + a fatty acid + H(+). It carries out the reaction 1,2-dihexadecanoyl-sn-glycero-3-phosphocholine + H2O = 2-hexadecanoyl-sn-glycero-3-phosphocholine + hexadecanoate + H(+). The enzyme catalyses 1,2-dihexadecanoyl-sn-glycero-3-phosphocholine + H2O = 1-hexadecanoyl-sn-glycero-3-phosphocholine + hexadecanoate + H(+). The catalysed reaction is 1-hexadecanoyl-2-(5Z,8Z,11Z,14Z-eicosatetraenoyl)-sn-glycero-3-phosphoethanolamine + H2O = 2-(5Z,8Z,11Z,14Z)-eicosatetraenoyl-sn-glycero-3-phosphoethanolamine + hexadecanoate + H(+). It catalyses the reaction 1-hexadecanoyl-2-(5Z,8Z,11Z,14Z-eicosatetraenoyl)-sn-glycero-3-phosphoethanolamine + H2O = 1-hexadecanoyl-sn-glycero-3-phosphoethanolamine + (5Z,8Z,11Z,14Z)-eicosatetraenoate + H(+). It carries out the reaction 1,2-di-(9Z-octadecenoyl)-sn-glycero-3-phosphoethanolamine + 1,2-dihexadecanoyl-sn-glycero-3-phosphocholine = hexadecanoyl-sn-glycero-3-phosphocholine + N-hexadecanoyl-1,2-di-(9Z-octadecenoyl)-sn-glycero-3-phosphoethanolamine + H(+). The enzyme catalyses 1,2-dihexadecanoyl-sn-glycero-3-phosphocholine + a 2-acyl-sn-glycero-3-phosphocholine = a 1-hexadecanoyl-2-acyl-sn-glycero-3-phosphocholine + 2-hexadecanoyl-sn-glycero-3-phosphocholine. Its function is as follows. Exhibits both phospholipase A1/2 and acyltransferase activities. Shows phospholipase A1 (PLA1) and A2 (PLA2) activity, catalyzing the calcium-independent release of fatty acids from the sn-1 or sn-2 position of glycerophospholipids. Shows O-acyltransferase activity, catalyzing the transfer of a fatty acyl group from glycerophospholipid to the hydroxyl group of lysophospholipid. The chain is Phospholipase A and acyltransferase 1 from Rattus norvegicus (Rat).